An 870-amino-acid polypeptide reads, in one-letter code: Protein csx2 (870 aa).

The disordered stretch occupies residues 212-251 (TSPEISDAPPLSGNVDPLPINSPPLTNPVARDIDQTEPED). Residues 510-614 (TSAKQGLLLA…WIEAIQYSIS (105 aa)) enclose the PH domain. Phosphoserine is present on residues Ser625, Ser653, and Ser655. Positions 647 to 672 (RVASVTSPSRHNSDSKEKKQTKSPSL) are disordered. Over residues 657 to 666 (HNSDSKEKKQ) the composition is skewed to basic and acidic residues. In terms of domain architecture, Arf-GAP spans 670–791 (PSLVKTLKEM…RFIKSSFSHD (122 aa)). The C4-type zinc-finger motif lies at 686–710 (CADCNTTARVEWCAINFPVVLCIDC).

This Schizosaccharomyces pombe (strain 972 / ATCC 24843) (Fission yeast) protein is Protein csx2 (csx2).